The following is a 194-amino-acid chain: Holliday junction branch migration complex subunit RuvA (194 aa).

Residues 1-64 (MISRLTGKLV…EDAHLLFGFA (64 aa)) are domain I. Residues 65–143 (TAEERKTFRQ…AHAVTDGLFA (79 aa)) form a domain II region. The flexible linker stretch occupies residues 144 to 147 (AAPA). The tract at residues 147 to 194 (AADETEDIVGTLLALGYSEREAKAAVKGVPKGTDVGEGVRLALKNLLK) is domain III.

It belongs to the RuvA family. In terms of assembly, homotetramer. Forms an RuvA(8)-RuvB(12)-Holliday junction (HJ) complex. HJ DNA is sandwiched between 2 RuvA tetramers; dsDNA enters through RuvA and exits via RuvB. An RuvB hexamer assembles on each DNA strand where it exits the tetramer. Each RuvB hexamer is contacted by two RuvA subunits (via domain III) on 2 adjacent RuvB subunits; this complex drives branch migration. In the full resolvosome a probable DNA-RuvA(4)-RuvB(12)-RuvC(2) complex forms which resolves the HJ.

It is found in the cytoplasm. Functionally, the RuvA-RuvB-RuvC complex processes Holliday junction (HJ) DNA during genetic recombination and DNA repair, while the RuvA-RuvB complex plays an important role in the rescue of blocked DNA replication forks via replication fork reversal (RFR). RuvA specifically binds to HJ cruciform DNA, conferring on it an open structure. The RuvB hexamer acts as an ATP-dependent pump, pulling dsDNA into and through the RuvAB complex. HJ branch migration allows RuvC to scan DNA until it finds its consensus sequence, where it cleaves and resolves the cruciform DNA. This is Holliday junction branch migration complex subunit RuvA from Neisseria meningitidis serogroup C / serotype 2a (strain ATCC 700532 / DSM 15464 / FAM18).